A 461-amino-acid chain; its full sequence is MIRAAFACLAATVVVAGWWTPPAWAIGPPVVDAAAQPPSGDPGPVAPMEQRGACSVSGVIPGTDPGVPTPSQTMLNLPAAWQFSRGEGQLVAIIDTGVQPGPRLPNVDAGGDFVESTDGLTDCDGHGTLVAGIVAGQPGNDGFSGVAPAARLLSIRAMSTKFSPRTSGGDPQLAQATLDVAVLAGAIVHAADLGAKVINVSTITCLPADRMVDQAALGAAIRYAAVDKDAVIVAAAGNTGASGSVSASCDSNPLTDLSRPDDPRNWAGVTSVSIPSWWQPYVLSVASLTSAGQPSKFSMPGPWVGIAAPGENIASVSNSGDGALANGLPDAHQKLVALSGTSYAAGYVSGVAALVRSRYPGLNATEVVRRLTATAHRGARESSNIVGAGNLDAVAALTWQLPAEPGGGAAPAKPVADPPVPAPKDTTPRNVAFAGAAALSVLVGLTAATVAIARRRREPTE.

The N-terminal stretch at 1-25 (MIRAAFACLAATVVVAGWWTPPAWA) is a signal peptide. In terms of domain architecture, Peptidase S8 spans 64 to 397 (DPGVPTPSQT…AGNLDAVAAL (334 aa)). Residues Asp95, His126, and Ser342 each act as charge relay system in the active site. Residues 432 to 452 (AFAGAAALSVLVGLTAATVAI) traverse the membrane as a helical segment.

Belongs to the peptidase S8 family.

It is found in the cell membrane. In Mycobacterium tuberculosis (strain ATCC 25618 / H37Rv), this protein is Mycosin-3.